The sequence spans 306 residues: MTNKPAKRPVNGVLLLDKPEGLSSNTALQKTRHLFRAEKAGHTGVLDPLATGLLPVCFGEATKFAQYLINADKAYTATLKLGEASSTGDAEGEIVATARADISLAEFQTACQALTGNIRQVPPMFSALKHEGKPLYEYARKGIVIERKARDITVYAIDIAEFDAPKAVIDVRCSKGTYIRTLSEDIAKHIGTFAHLTALRRTETAGFTIAQSHTLEALANLDETERDSLLLPCDVLVAHFPQTVLNDYAVHMLRCGQRPRFEEDLPSDTPVRVYTENGRFVGLAEYQKEICRLKALRLMNTAASAA.

Catalysis depends on Asp-47, which acts as the Nucleophile.

This sequence belongs to the pseudouridine synthase TruB family. Type 1 subfamily.

It catalyses the reaction uridine(55) in tRNA = pseudouridine(55) in tRNA. Its function is as follows. Responsible for synthesis of pseudouridine from uracil-55 in the psi GC loop of transfer RNAs. This Neisseria meningitidis serogroup A / serotype 4A (strain DSM 15465 / Z2491) protein is tRNA pseudouridine synthase B.